The primary structure comprises 466 residues: MEGTMSSCFRGMLMKLRFSELLNNISSFEKKVNNLSDIFSYGCLISVNGLLLEVIGLTAPIGSRCYVERIIDGKILNISAEVVGFKKEKTLLFSLEETYGVFPGTRVFLKCFKNTYSITGKIPLSTELLGRVLDSKGRPLDGRSQLNPKFFTFLKSNVVNPLNRKPITEVLDTGIRAINALITVGRGQRIGIFSSSGLGKSILLGMMAKYTKADVVIIGLIGERGREVKDFIENILGSNGLSRSVVIAAPADVSPLLQIEAASYATSIAEYFRKKNKHVLLIMDSLTRYAMAQRAVSLSLGELPVSKGYPSSVFSKIPILVERTGNTDNYGSITSFYTVLTESEEDPQDPIAHICRSILDGHIVLSRHYAELGHYPAIDIENSISRVMPNIISKKQYSQACYFKKLIASYQRNRDLINIGAYLKGTDSTLDHAIKIWPILERFLQQKQSEKSSYLSSCEELNQIFI.

194 to 201 (SSSGLGKS) contributes to the ATP binding site.

This sequence belongs to the ATPase alpha/beta chains family.

It is found in the cytoplasm. The enzyme catalyses ATP + H2O + 4 H(+)(in) = ADP + phosphate + 5 H(+)(out). In terms of biological role, probable catalytic subunit of a protein translocase for flagellum-specific export, or a proton translocase involved in local circuits at the flagellum. May be involved in a specialized protein export pathway that proceeds without signal peptide cleavage. This Buchnera aphidicola subsp. Schizaphis graminum (strain Sg) protein is Flagellum-specific ATP synthase (fliI).